The following is a 205-amino-acid chain: Nitrophorin-4 (205 aa).

An N-terminal signal peptide occupies residues 1–21 (MKSYTSLLAVAILCLFGGVNG). 2 cysteine pairs are disulfide-bonded: cysteine 23-cysteine 143 and cysteine 62-cysteine 192. Histidine 80 serves as a coordination point for heme.

The protein belongs to the calycin superfamily. Nitrophorin family. Heme b serves as cofactor. Salivary gland (at protein level).

It is found in the secreted. It carries out the reaction 3 nitrite + 2 H(+) = 2 nitric oxide + nitrate + H2O. Functionally, heme-based protein that delivers nitric oxide gas (NO) to the victim while feeding, resulting in vasodilation and inhibition of platelet aggregation. Reversibly binds nitric oxide (NO). Also binds tightly to histamine, which is released by the host to induce wound healing. NO release is pH dependent and linked to loop dynamics. In Rhodnius prolixus (Triatomid bug), this protein is Nitrophorin-4.